The chain runs to 239 residues: Ribosomal RNA small subunit methyltransferase G (239 aa).

Residues glycine 76, phenylalanine 81, 99-101 (DSS), 128-129 (IE), and arginine 147 each bind S-adenosyl-L-methionine.

Belongs to the methyltransferase superfamily. RNA methyltransferase RsmG family.

It is found in the cytoplasm. Functionally, specifically methylates the N7 position of a guanine in 16S rRNA. This Prochlorococcus marinus subsp. pastoris (strain CCMP1986 / NIES-2087 / MED4) protein is Ribosomal RNA small subunit methyltransferase G.